A 403-amino-acid polypeptide reads, in one-letter code: Aspartic endopeptidase PEP1 (403 aa).

An N-terminal signal peptide occupies residues 1–20; the sequence is MVQISQIGAVLAVCSTLTVA. Residues 21–67 constitute a propeptide, activation peptide; sequence APTKGKARFNVPQVAVPMKAVHHPAVAYARALHKFGMKVPKAVSDAA. Residues 82-400 form the Peptidase A1 domain; that stretch reads YVTQVTVGQG…DTEGPRIGFA (319 aa). Residue aspartate 98 is part of the active site. N-linked (GlcNAc...) asparagine glycans are attached at residues asparagine 159 and asparagine 270. Aspartate 293 is an active-site residue. Cysteine 329 and cysteine 361 are joined by a disulfide.

It belongs to the peptidase A1 family.

Its subcellular location is the secreted. It carries out the reaction Hydrolysis of proteins with broad specificity. Generally favors hydrophobic residues in P1 and P1', but also accepts Lys in P1, which leads to activation of trypsinogen. Does not clot milk.. Its function is as follows. Secreted aspartic endopeptidase that allows assimilation of proteinaceous substrates. Can catalyze hydrolysis of the major structural proteins of basement membrane, elastin, collagen, and laminin. Thought to play a significant role in virulence. In terms of biological role, can catalyze hydrolysis of the major structural proteins of basement membrane, elastin, collagen, and laminin. Thought to play a significant role in virulence. In Trichophyton verrucosum (strain HKI 0517), this protein is Aspartic endopeptidase PEP1 (PEP1).